The chain runs to 604 residues: Sulfite reductase [NADPH] flavoprotein alpha-component (604 aa).

The Flavodoxin-like domain occupies 68-206; sequence LSIIFASQTG…PAAEWRKQAL (139 aa). FMN-binding positions include 74 to 79, 121 to 124, and 157 to 166; these read SQTGNA, STNG, and LGDSSYEFFC. The region spanning 239–453 is the FAD-binding FR-type domain; that stretch reads QNPYTATLLT…VEHNNNFKLP (215 aa). Residues Thr327, Gly361, 391-394, 409-411, Tyr415, and 424-427 each bind FAD; these read RLYS, TVG, and GGAS. Residues 524-525, 530-534, and Asp566 contribute to the NADP(+) site; these read SR and KVYVQ. Residue Tyr604 coordinates FAD.

This sequence belongs to the NADPH-dependent sulphite reductase flavoprotein subunit CysJ family. In the N-terminal section; belongs to the flavodoxin family. The protein in the C-terminal section; belongs to the flavoprotein pyridine nucleotide cytochrome reductase family. Alpha(8)-beta(8). The alpha component is a flavoprotein, the beta component is a hemoprotein. FAD serves as cofactor. The cofactor is FMN.

The catalysed reaction is hydrogen sulfide + 3 NADP(+) + 3 H2O = sulfite + 3 NADPH + 4 H(+). It functions in the pathway sulfur metabolism; hydrogen sulfide biosynthesis; hydrogen sulfide from sulfite (NADPH route): step 1/1. Component of the sulfite reductase complex that catalyzes the 6-electron reduction of sulfite to sulfide. This is one of several activities required for the biosynthesis of L-cysteine from sulfate. The flavoprotein component catalyzes the electron flow from NADPH -&gt; FAD -&gt; FMN to the hemoprotein component. The chain is Sulfite reductase [NADPH] flavoprotein alpha-component from Aliivibrio fischeri (strain ATCC 700601 / ES114) (Vibrio fischeri).